A 135-amino-acid chain; its full sequence is uncharacterized protein (135 aa).

Positions 8 to 123 constitute a HotDog ACOT-type domain; it reads PKGIIVLKTL…IFIYVAINKT (116 aa).

This sequence belongs to the acyl coenzyme A hydrolase family.

This is an uncharacterized protein from Buchnera aphidicola subsp. Acyrthosiphon pisum (strain APS) (Acyrthosiphon pisum symbiotic bacterium).